Reading from the N-terminus, the 374-residue chain is Low-specificity L-threonine aldolase (374 aa).

N6-(pyridoxal phosphate)lysine is present on lysine 213. A disordered region spans residues 354 to 374; it reads HPHKDDGRNNKKMYSLDAIKK.

This sequence belongs to the threonine aldolase family. Homotetramer. It depends on pyridoxal 5'-phosphate as a cofactor.

It carries out the reaction L-threonine = acetaldehyde + glycine. The catalysed reaction is L-allo-threonine = acetaldehyde + glycine. It functions in the pathway amino-acid degradation; L-threonine degradation via aldolase pathway; acetaldehyde and glycine from L-threonine: step 1/1. The polypeptide is Low-specificity L-threonine aldolase (GLY1) (Candida albicans (Yeast)).